Consider the following 408-residue polypeptide: G patch domain-containing protein 4 (408 aa).

Position 1 is an N-acetylmethionine (methionine 1). Threonine 4 bears the Phosphothreonine mark. The region spanning 11 to 57 (GMKFAEEQLLKHGWTQGKGLGRKENGITQALRVTLKQDTYGVGHDPA) is the G-patch domain. A Glycyl lysine isopeptide (Lys-Gly) (interchain with G-Cter in SUMO2) cross-link involves residue lysine 46. Threonine 116 bears the Phosphothreonine mark. 2 disordered regions span residues 116-141 (TSSG…KPPN) and 187-408 (GQDP…KKRD). Residues serine 128 and serine 130 each carry the phosphoserine modification. 3 stretches are compositionally biased toward basic and acidic residues: residues 222 to 236 (RSAE…ESIR), 245 to 257 (HQEE…REGT), and 274 to 283 (LKNREHVDRS). Over residues 340–354 (EEDLNTEDEEVEEAL) the composition is skewed to acidic residues. A compositionally biased stretch (basic and acidic residues) spans 358–372 (GTREAESRSCSDQKR). A compositionally biased stretch (basic residues) spans 398 to 408 (KAKKKKQKKRD).

This chain is G patch domain-containing protein 4 (GPATCH4), found in Bos taurus (Bovine).